Reading from the N-terminus, the 189-residue chain is MATTVTPEPLTALSRWYLYAIHGYFCEVMFTAAWEFVVNCNWKFPGVTSVWALFIYGTCILIVERMYLCLKDRCNVLLRCIIYTLWTYFWEFGTGFLLRQFNACPWDYSEFKYNFMGLITAEYAVPWFCASFIVERLVIRNTLRLRFDEVAESGQAEERLDRGGGGRGGRRGRGARAGATSANGYVKVD.

At 1–17 (MATTVTPEPLTALSRWY) the chain is on the cytoplasmic side. The helical transmembrane segment at 18-38 (LYAIHGYFCEVMFTAAWEFVV) threads the bilayer. The Extracellular portion of the chain corresponds to 39–43 (NCNWK). A helical transmembrane segment spans residues 44-64 (FPGVTSVWALFIYGTCILIVE). At 65-75 (RMYLCLKDRCN) the chain is on the cytoplasmic side. A helical membrane pass occupies residues 76-96 (VLLRCIIYTLWTYFWEFGTGF). At 97-114 (LLRQFNACPWDYSEFKYN) the chain is on the extracellular side. The chain crosses the membrane as a helical span at residues 115-135 (FMGLITAEYAVPWFCASFIVE). Residues 136 to 189 (RLVIRNTLRLRFDEVAESGQAEERLDRGGGGRGGRRGRGARAGATSANGYVKVD) are Cytoplasmic-facing. The disordered stretch occupies residues 158-189 (ERLDRGGGGRGGRRGRGARAGATSANGYVKVD).

Belongs to the TMEM229 family.

The protein resides in the membrane. The sequence is that of Transmembrane protein 229b (tmem229b) from Danio rerio (Zebrafish).